Consider the following 121-residue polypeptide: Large ribosomal subunit protein bL12 (121 aa).

Belongs to the bacterial ribosomal protein bL12 family. As to quaternary structure, homodimer. Part of the ribosomal stalk of the 50S ribosomal subunit. Forms a multimeric L10(L12)X complex, where L10 forms an elongated spine to which 2 to 4 L12 dimers bind in a sequential fashion. Binds GTP-bound translation factors.

Forms part of the ribosomal stalk which helps the ribosome interact with GTP-bound translation factors. Is thus essential for accurate translation. This is Large ribosomal subunit protein bL12 from Shewanella pealeana (strain ATCC 700345 / ANG-SQ1).